An 831-amino-acid polypeptide reads, in one-letter code: Phosphoinositide phosphatase SAC4 (831 aa).

The region spanning 162 to 551 (LCMVDLTKDF…GDTLAYQYGG (390 aa)) is the SAC domain. Residues 439-475 (SDADTSPHNSSDDDSRDYDSLEKNCRPSKNVANGDYD) form a disordered region. Residues 448-463 (SSDDDSRDYDSLEKNC) show a composition bias toward basic and acidic residues. The short motif at 487-498 (RTNCIDCLDRTN) is the Phosphatase catalytic core element. Residues 785–805 (PAMRESGSSSRKGKEPVETEL) form a disordered region. A compositionally biased stretch (basic and acidic residues) spans 796–805 (KGKEPVETEL).

As to quaternary structure, component of the PI(3,5)P2 regulatory complex at least composed of ATG18, SAC/FIG4, FAB1 and VAC14. Requires Mg(2+) as cofactor. In terms of tissue distribution, ubiquitous with a higher level of expression in young seedlings than in other tissues.

The protein localises to the vacuole membrane. The catalysed reaction is a 1,2-diacyl-sn-glycero-3-phospho-(1D-myo-inositol-3,5-bisphosphate) + H2O = a 1,2-diacyl-sn-glycero-3-phospho-(1D-myo-inositol-3-phosphate) + phosphate. In terms of biological role, the PI(3,5)P2 regulatory complex regulates both the synthesis and turnover of phosphatidylinositol 3,5-bisphosphate (PtdIns(3,5)P2). The chain is Phosphoinositide phosphatase SAC4 (SAC4) from Arabidopsis thaliana (Mouse-ear cress).